The primary structure comprises 119 residues: Large ribosomal subunit protein uL22 (119 aa).

Belongs to the universal ribosomal protein uL22 family. Part of the 50S ribosomal subunit.

In terms of biological role, this protein binds specifically to 23S rRNA; its binding is stimulated by other ribosomal proteins, e.g. L4, L17, and L20. It is important during the early stages of 50S assembly. It makes multiple contacts with different domains of the 23S rRNA in the assembled 50S subunit and ribosome. Its function is as follows. The globular domain of the protein is located near the polypeptide exit tunnel on the outside of the subunit, while an extended beta-hairpin is found that lines the wall of the exit tunnel in the center of the 70S ribosome. The chain is Large ribosomal subunit protein uL22 from Tropheryma whipplei (strain TW08/27) (Whipple's bacillus).